A 103-amino-acid chain; its full sequence is Small ribosomal subunit protein uS10 (103 aa).

The protein belongs to the universal ribosomal protein uS10 family. As to quaternary structure, part of the 30S ribosomal subunit.

Involved in the binding of tRNA to the ribosomes. The sequence is that of Small ribosomal subunit protein uS10 from Haemophilus ducreyi (strain 35000HP / ATCC 700724).